Here is a 508-residue protein sequence, read N- to C-terminus: Acyl-CoA-binding domain-containing protein 5 (508 aa).

Residues 44-133 form the ACB domain; sequence YETRFEAAVK…MKKIIETMPM (90 aa). Residues 55–64, 75–79, Lys-101, and Tyr-120 each bind an acyl-CoA; these read IQSLPKNGSF and YSFYK. Residues 175–215 form a disordered region; sequence AKAVNGKAESSDSGAESEEEEAQEELKGAEQSGSDDKKTLK. Positions 181–214 form a coiled coil; it reads KAESSDSGAESEEEEAQEELKGAEQSGSDDKKTL. A phosphoserine mark is found at Ser-184, Ser-185, Ser-187, Ser-191, Ser-206, and Ser-233. A compositionally biased stretch (basic and acidic residues) spans 198 to 215; the sequence is EELKGAEQSGSDDKKTLK. A compositionally biased stretch (basic and acidic residues) spans 240–260; the sequence is SDIHTDSSRSTRSSEDEKPGD. Residues 240–300 are disordered; the sequence is SDIHTDSSRS…LTSDSDSEVY (61 aa). Ser-303 is modified (phosphoserine). Disordered regions lie at residues 318 to 340 and 353 to 419; these read PTQH…NGSI and EVKH…RGSR. Over residues 353 to 376 the composition is skewed to basic and acidic residues; that stretch reads EVKHGGEDGRSSSGAPHRETRGGE. Ser-405 carries the phosphoserine modification. The span at 408–418 shows a compositional bias: basic and acidic residues; it reads DGERWGSDRGS. A coiled-coil region spans residues 428–453; that stretch reads LVLIRLQEDMQNVLQRLHKLETLTAS. The residue at position 446 (Lys-446) is an N6-acetyllysine. A helical membrane pass occupies residues 480-500; that stretch reads GALAFAIIWPFIAQWLAHLYY.

Belongs to the ATG37 family.

It localises to the peroxisome membrane. Functionally, acyl-CoA binding protein which acts as the peroxisome receptor for pexophagy but is dispensable for aggrephagy and nonselective autophagy. Binds medium- and long-chain acyl-CoA esters. This Mus musculus (Mouse) protein is Acyl-CoA-binding domain-containing protein 5 (Acbd5).